A 531-amino-acid polypeptide reads, in one-letter code: Protein MGF 505-1R (531 aa).

The protein belongs to the asfivirus MGF 505 family.

Functionally, plays a role in virus cell tropism, and may be required for efficient virus replication in macrophages. The protein is Protein MGF 505-1R of Ornithodoros (relapsing fever ticks).